We begin with the raw amino-acid sequence, 112 residues long: Prostatic steroid-binding protein C2 (112 aa).

The signal sequence occupies residues 1–20 (MRLSLCLLTILVVCCYEANG). A Pyrrolidone carboxylic acid modification is found at Gln-21.

This sequence belongs to the secretoglobin family. Lipophilin subfamily. In terms of assembly, prostatein is composed of three different peptides called C1, C2 and C3. These form covalent C1:C3 (F) and C2:C3 (S) heterodimers whose noncovalent association forms tetrameric (C1:C3/C3:C2) prostatein molecules. Post-translationally, linked by three disulfide bonds to C3. The N-terminus is blocked.

The protein resides in the secreted. Functionally, part of prostatein which is the major secretory glycoprotein of ventral prostate gland. The protein is Prostatic steroid-binding protein C2 (Psbpc2) of Rattus norvegicus (Rat).